Reading from the N-terminus, the 393-residue chain is S-adenosylmethionine synthase 2 (393 aa).

Glu9 is a Mg(2+) binding site. His15 contributes to the ATP binding site. Glu43 is a K(+) binding site. The L-methionine site is built by Glu56 and Gln99. Residues 167–169, 235–238, Asp246, 252–253, Ala269, Lys273, and Lys277 contribute to the ATP site; these read DGK, SGRF, and RK. Asp246 serves as a coordination point for L-methionine. L-methionine is bound at residue Lys277.

This sequence belongs to the AdoMet synthase family. Homotetramer. The cofactor is Mn(2+). Requires Mg(2+) as cofactor. It depends on Co(2+) as a cofactor. K(+) is required as a cofactor.

Its subcellular location is the cytoplasm. It carries out the reaction L-methionine + ATP + H2O = S-adenosyl-L-methionine + phosphate + diphosphate. Its pathway is amino-acid biosynthesis; S-adenosyl-L-methionine biosynthesis; S-adenosyl-L-methionine from L-methionine: step 1/1. Catalyzes the formation of S-adenosylmethionine from methionine and ATP. The reaction comprises two steps that are both catalyzed by the same enzyme: formation of S-adenosylmethionine (AdoMet) and triphosphate, and subsequent hydrolysis of the triphosphate. May be involved in the synthesis of betain in response to abiotic stress such as high salinity. This chain is S-adenosylmethionine synthase 2 (SAMS2), found in Beta vulgaris (Sugar beet).